We begin with the raw amino-acid sequence, 498 residues long: Ribulose bisphosphate carboxylase large chain (498 aa).

Residues 1-2 (MS) constitute a propeptide that is removed on maturation. N-acetylproline is present on P3. N6,N6,N6-trimethyllysine is present on K14. Substrate-binding residues include N123 and T173. K175 serves as the catalytic Proton acceptor. Position 177 (K177) interacts with substrate. Positions 201, 203, and 204 each coordinate Mg(2+). Residue K201 is modified to N6-carboxylysine. H294 serves as the catalytic Proton acceptor. Substrate-binding residues include R295, H327, and S379. A disordered region spans residues 471-498 (PVDTLDPNDKKQRDNEDTLADKLFGDKG).

Belongs to the RuBisCO large chain family. Type I subfamily. In terms of assembly, heterohexadecamer of 8 large chains and 8 small chains; disulfide-linked. The disulfide link is formed within the large subunit homodimers. Requires Mg(2+) as cofactor. Post-translationally, the disulfide bond which can form in the large chain dimeric partners within the hexadecamer appears to be associated with oxidative stress and protein turnover.

The protein localises to the plastid. It carries out the reaction 2 (2R)-3-phosphoglycerate + 2 H(+) = D-ribulose 1,5-bisphosphate + CO2 + H2O. It catalyses the reaction D-ribulose 1,5-bisphosphate + O2 = 2-phosphoglycolate + (2R)-3-phosphoglycerate + 2 H(+). RuBisCO catalyzes two reactions: the carboxylation of D-ribulose 1,5-bisphosphate, the primary event in carbon dioxide fixation, as well as the oxidative fragmentation of the pentose substrate in the photorespiration process. Both reactions occur simultaneously and in competition at the same active site. The protein is Ribulose bisphosphate carboxylase large chain (rbcL) of Cuscuta reflexa (Southern Asian dodder).